We begin with the raw amino-acid sequence, 206 residues long: Putative precorrin-2 dehydrogenase (206 aa).

Residues 20 to 21 (SV) and 41 to 46 (KEFDEE) each bind NAD(+).

The protein belongs to the precorrin-2 dehydrogenase / sirohydrochlorin ferrochelatase family. Homodimer.

It carries out the reaction precorrin-2 + NAD(+) = sirohydrochlorin + NADH + 2 H(+). It participates in porphyrin-containing compound metabolism; siroheme biosynthesis; sirohydrochlorin from precorrin-2: step 1/1. In terms of biological role, involved in the archaeal biosynthesis of heme. Catalyzes the oxiation of precorrin-2 into sirohydroclorin. In Methanocaldococcus jannaschii (strain ATCC 43067 / DSM 2661 / JAL-1 / JCM 10045 / NBRC 100440) (Methanococcus jannaschii), this protein is Putative precorrin-2 dehydrogenase.